The sequence spans 275 residues: Phosphite import ATP-binding protein PxtA (275 aa).

The region spanning 11 to 252 (LRVDRLSVVY…QLERIYAGRS (242 aa)) is the ABC transporter domain. 44–51 (GLSGAGKS) provides a ligand contact to ATP. Positions 251 to 275 (RSTTQPANAPAEPPVMLEPSLEMSR) are disordered.

The protein belongs to the ABC transporter superfamily. Phosphonates importer (TC 3.A.1.9.1) family. In terms of assembly, the complex is composed of two ATP-binding proteins (PtxA), two transmembrane proteins (PtxC) and a solute-binding protein (PtxB).

It is found in the cell inner membrane. The catalysed reaction is phosphite(out) + ATP + H2O = phosphite(in) + ADP + phosphate + H(+). Functionally, part of the ABC transporter complex PtxABC involved in phosphite import. Responsible for energy coupling to the transport system. This chain is Phosphite import ATP-binding protein PxtA (ptxA), found in Stutzerimonas stutzeri (Pseudomonas stutzeri).